We begin with the raw amino-acid sequence, 109 residues long: Putative transposase MJ0856.1 (109 aa).

Positions 36, 39, 62, and 65 each coordinate Zn(2+).

The protein belongs to the transposase 35 family.

This is Putative transposase MJ0856.1 from Methanocaldococcus jannaschii (strain ATCC 43067 / DSM 2661 / JAL-1 / JCM 10045 / NBRC 100440) (Methanococcus jannaschii).